The following is a 103-amino-acid chain: Small ribosomal subunit protein uS10 (103 aa).

The protein belongs to the universal ribosomal protein uS10 family. Part of the 30S ribosomal subunit.

Involved in the binding of tRNA to the ribosomes. This Shewanella baltica (strain OS223) protein is Small ribosomal subunit protein uS10.